Reading from the N-terminus, the 291-residue chain is Flap endonuclease (291 aa).

The segment at 82 to 116 (YKGNRDEKYAQRTEEEKALDEQFFEYLKDAFELCK) is helical arch. DNA is bound at residue K83. D130, D153, D155, and D201 together coordinate Mg(2+). Residues 188–224 (DVEQFISLKAIMGDLGDNIRGVEGIGAKRGYNIIREF) form a DNA-binding; H3TH region. Residues 190-263 (EQFISLKAIM…FRNLILVDLP (74 aa)) enclose the 5'-3' exonuclease domain. The K(+) site is built by V209 and I212.

It depends on Mg(2+) as a cofactor. K(+) is required as a cofactor.

It catalyses the reaction Exonucleolytic cleavage in the 5'- to 3'-direction to yield nucleoside 5'-phosphates.. Its activity is regulated as follows. Inhibited by p-hydroxymercuribenzoate (PHMB). Catalyzes both the 5'-exonucleolytic and structure-specific endonucleolytic hydrolysis of DNA branched nucleic acid molecules and probably plays a role in viral genome replication. Active on flap (branched duplex DNA containing a free single-stranded 5'-end), 5'overhangs and pseudo-Y structures. The substrates require a free, single-stranded 5' end, with endonucleolytic hydrolysis occurring at the junction of double- and single-stranded DNA. This function may be used for example to trim such branched molecules generated by Okazaki fragments synthesis during replication. This is Flap endonuclease (D15) from Escherichia phage T5 (Enterobacteria phage T5).